We begin with the raw amino-acid sequence, 156 residues long: Ribosome maturation factor RimP (156 aa).

The protein belongs to the RimP family.

The protein resides in the cytoplasm. Required for maturation of 30S ribosomal subunits. The polypeptide is Ribosome maturation factor RimP (Bacillus cereus (strain G9842)).